A 135-amino-acid chain; its full sequence is MRFIVSLLAFTAAATATALPASAAKNAKLATSAAFAKQAEGTTCNVGSIACCNSPAETNNDSLLSGLLGAGLLNGLSGNTGSACAKASLIDQLGLLALVDHTEEGPVCKNIVACCPEGTTNCVAVDNAGAGTKAE.

A signal peptide spans 1-18 (MRFIVSLLAFTAAATATA). 4 cysteine pairs are disulfide-bonded: C44/C114, C51/C108, C52/C84, and C115/C122. An N-linked (GlcNAc...) asparagine glycan is attached at N60.

This sequence belongs to the fungal hydrophobin family. Forms homodimers at high concentrations, and these dimers are off-pathway to rodlet formation. Dissociation of the dimers into monomers, with resultant exposure of the hydrophobic face, is necessary for self-assembly to form functional amyloid fibrils called rodlets. Self-assembly into fibrillar rodlets occurs spontaneously at hydrophobic:hydrophilic interfaces and the rodlets further associate laterally to form amphipathic monolayers.

The protein localises to the secreted. It localises to the spore wall. In terms of biological role, aerial growth, conidiation, and dispersal of filamentous fungi in the environment rely upon a capability of their secreting small amphipathic proteins called hydrophobins (HPBs) with low sequence identity. Class I can self-assemble into an outermost layer of rodlet bundles on aerial cell surfaces, conferring cellular hydrophobicity that supports fungal growth, development and dispersal; whereas Class II form highly ordered films at water-air interfaces through intermolecular interactions but contribute nothing to the rodlet structure. DewA is a class I hydrophobin that contributes to spore wall hydrophobicity. The sequence is that of Class I hydrophobin dewA from Emericella nidulans (strain FGSC A4 / ATCC 38163 / CBS 112.46 / NRRL 194 / M139) (Aspergillus nidulans).